Reading from the N-terminus, the 297-residue chain is Bifonsecin B biosynthesis cluster protein A (297 aa).

Residues 1–20 form the signal peptide; that stretch reads MHFWWTAISAGLLCLPQALG. Asn-26, Asn-56, Asn-75, Asn-124, Asn-175, Asn-210, and Asn-280 each carry an N-linked (GlcNAc...) asparagine glycan.

Belongs to the bfoA family.

Functionally, part of the gene cluster that mediates the biosynthesis of bifonsecin B, a dimeric gamma-naphthopyrone. The first step in the biosynthesis of bifonsecin B is the production of gamma-naphthopyrone precursor YWA1 by the non-reducing polyketide synthase albA, via condensation of one acetyl-CoA starter unit with 6 malonyl-CoA units. YWA1 is then methylated by bfoE at position C-6 to yield foncesin which is further methylated at position C-8 by bfoD to produce fonsecin B. A key enzyme in the biosynthetic pathway is the cytochrome P450 monooxygenase bfoB which catalyzes the oxidative dimerization of fonsecin B to bifonsecin B. Bfob also catalyzes the oxidative dimerization of rubrofusarin B into nigerone. The stereoselectivity of bfoB is influenced by the two natural monomeric substrates; homodimerization of fonsecin B yields a stereochemically pure biaryl, M-foncerine B, while rubrofusarin B yields a mixture of enantiomers M- and P-nigerone. The function of bfoA within the bifonsecin B biosynthesis pathway has not been determined yet. In Aspergillus brasiliensis (strain CBS 101740 / IMI 381727 / IBT 21946), this protein is Bifonsecin B biosynthesis cluster protein A.